Reading from the N-terminus, the 216-residue chain is MSSLVTPQHAEELSTGARQLGVELSAQQHELLLGYLALLIKWNKAYNLTAVRDPDEMVSRHLLDSLSVMPFIHNDTQRWLDVGSGGGMPGIPLAILHPHKQVTVLDSNGKKTRFLTQVKMELKLDNLTVIHSRVEEVQPEQPFCGIISRAFSSMENFTNWTRHLGDSRTQWLAMKGLHPADELVALPADFTVESEQALTVPGCQGQRHLLILRRKA.

S-adenosyl-L-methionine-binding positions include glycine 83, methionine 88, 134-135 (VE), and arginine 149.

The protein belongs to the methyltransferase superfamily. RNA methyltransferase RsmG family.

The protein resides in the cytoplasm. It catalyses the reaction guanosine(527) in 16S rRNA + S-adenosyl-L-methionine = N(7)-methylguanosine(527) in 16S rRNA + S-adenosyl-L-homocysteine. Specifically methylates the N7 position of guanine in position 527 of 16S rRNA. The chain is Ribosomal RNA small subunit methyltransferase G from Pseudomonas entomophila (strain L48).